The chain runs to 195 residues: HTH-type transcriptional regulator BetI (195 aa).

The HTH tetR-type domain occupies 8–68 (PIRRRQLIDA…ATMRDITSQL (61 aa)). A DNA-binding region (H-T-H motif) is located at residues 31–50 (TIAQIARRAGVSTGIISHYF).

Its pathway is amine and polyamine biosynthesis; betaine biosynthesis via choline pathway [regulation]. Functionally, repressor involved in the biosynthesis of the osmoprotectant glycine betaine. It represses transcription of the choline transporter BetT and the genes of BetAB involved in the synthesis of glycine betaine. The sequence is that of HTH-type transcriptional regulator BetI from Klebsiella pneumoniae (strain 342).